A 291-amino-acid chain; its full sequence is Undecaprenyl-diphosphatase (291 aa).

8 helical membrane-spanning segments follow: residues M1 to F21, S48 to F68, L99 to I119, L123 to A143, I159 to F179, S200 to V220, L236 to I256, and I269 to T289.

Belongs to the UppP family.

The protein localises to the cell membrane. The catalysed reaction is di-trans,octa-cis-undecaprenyl diphosphate + H2O = di-trans,octa-cis-undecaprenyl phosphate + phosphate + H(+). Its function is as follows. Catalyzes the dephosphorylation of undecaprenyl diphosphate (UPP). Confers resistance to bacitracin. This chain is Undecaprenyl-diphosphatase, found in Staphylococcus saprophyticus subsp. saprophyticus (strain ATCC 15305 / DSM 20229 / NCIMB 8711 / NCTC 7292 / S-41).